The primary structure comprises 165 residues: Shikimate kinase (165 aa).

11 to 16 (GAGKTT) provides a ligand contact to ATP. Threonine 15 contributes to the Mg(2+) binding site. Substrate is bound by residues aspartate 33, arginine 57, and glycine 78. Arginine 116 contributes to the ATP binding site. Arginine 134 is a substrate binding site.

Belongs to the shikimate kinase family. As to quaternary structure, monomer. Requires Mg(2+) as cofactor.

Its subcellular location is the cytoplasm. It catalyses the reaction shikimate + ATP = 3-phosphoshikimate + ADP + H(+). Its pathway is metabolic intermediate biosynthesis; chorismate biosynthesis; chorismate from D-erythrose 4-phosphate and phosphoenolpyruvate: step 5/7. In terms of biological role, catalyzes the specific phosphorylation of the 3-hydroxyl group of shikimic acid using ATP as a cosubstrate. The protein is Shikimate kinase of Bacillus anthracis (strain A0248).